We begin with the raw amino-acid sequence, 361 residues long: Probable cinnamyl alcohol dehydrogenase (361 aa).

Residue C48 coordinates Zn(2+). Residue T50 coordinates NADP(+). Residues H70, E71, C101, C104, C107, C115, and C164 each contribute to the Zn(2+) site. Residues T168, 189 to 194 (GLGGVG), 212 to 217 (SSSDKK), T252, G276, and 299 to 301 (SFI) each bind NADP(+).

The protein belongs to the zinc-containing alcohol dehydrogenase family. In terms of assembly, homodimer. It depends on Zn(2+) as a cofactor.

It carries out the reaction (E)-cinnamyl alcohol + NADP(+) = (E)-cinnamaldehyde + NADPH + H(+). It catalyses the reaction (E)-coniferol + NADP(+) = (E)-coniferaldehyde + NADPH + H(+). The enzyme catalyses (E)-sinapyl alcohol + NADP(+) = (E)-sinapaldehyde + NADPH + H(+). The catalysed reaction is (E)-4-coumaroyl alcohol + NADP(+) = (E)-4-coumaraldehyde + NADPH + H(+). It carries out the reaction (E)-caffeyl alcohol + NADP(+) = (E)-caffeyl aldehyde + NADPH + H(+). The protein operates within aromatic compound metabolism; phenylpropanoid biosynthesis. Involved in lignin biosynthesis. Catalyzes the final step specific for the production of lignin monomers. Catalyzes the NADPH-dependent reduction of coniferaldehyde, 5-hydroxyconiferaldehyde, sinapaldehyde, 4-coumaraldehyde and caffeyl aldehyde to their respective alcohols. In Lolium perenne (Perennial ryegrass), this protein is Probable cinnamyl alcohol dehydrogenase.